The following is a 324-amino-acid chain: UDP-N-acetylenolpyruvoylglucosamine reductase (324 aa).

One can recognise an FAD-binding PCMH-type domain in the interval 36-203 (FRAGGLAELM…THAIFEGFPE (168 aa)). The active site involves Arg-183. The active-site Proton donor is the Ser-232. Glu-302 is a catalytic residue.

Belongs to the MurB family. It depends on FAD as a cofactor.

It localises to the cytoplasm. It carries out the reaction UDP-N-acetyl-alpha-D-muramate + NADP(+) = UDP-N-acetyl-3-O-(1-carboxyvinyl)-alpha-D-glucosamine + NADPH + H(+). It functions in the pathway cell wall biogenesis; peptidoglycan biosynthesis. In terms of biological role, cell wall formation. This is UDP-N-acetylenolpyruvoylglucosamine reductase from Sinorhizobium fredii (strain NBRC 101917 / NGR234).